A 288-amino-acid chain; its full sequence is Bifunctional protein FolD (288 aa).

Residues 166 to 168 and isoleucine 232 each bind NADP(+); that span reads GAS.

This sequence belongs to the tetrahydrofolate dehydrogenase/cyclohydrolase family. Homodimer.

The catalysed reaction is (6R)-5,10-methylene-5,6,7,8-tetrahydrofolate + NADP(+) = (6R)-5,10-methenyltetrahydrofolate + NADPH. The enzyme catalyses (6R)-5,10-methenyltetrahydrofolate + H2O = (6R)-10-formyltetrahydrofolate + H(+). It functions in the pathway one-carbon metabolism; tetrahydrofolate interconversion. Functionally, catalyzes the oxidation of 5,10-methylenetetrahydrofolate to 5,10-methenyltetrahydrofolate and then the hydrolysis of 5,10-methenyltetrahydrofolate to 10-formyltetrahydrofolate. This is Bifunctional protein FolD from Yersinia pseudotuberculosis serotype O:1b (strain IP 31758).